The following is a 228-amino-acid chain: uncharacterized protein (228 aa).

Positions 7 to 228 (VEVHHLKKSV…LVNGQLQEEA (222 aa)) constitute an ABC transporter domain. 43–50 (GESGSGKS) is a binding site for ATP.

It belongs to the ABC transporter superfamily.

This is an uncharacterized protein from Escherichia coli O157:H7.